Consider the following 55-residue polypeptide: Large ribosomal subunit protein bL33 (55 aa).

The span at 1–11 shows a compositional bias: basic and acidic residues; that stretch reads MAKGGREKIKL. The interval 1–27 is disordered; sequence MAKGGREKIKLESTAGTGHFYTTSKNK. The segment covering 14–24 has biased composition (polar residues); the sequence is TAGTGHFYTTS.

This sequence belongs to the bacterial ribosomal protein bL33 family.

The sequence is that of Large ribosomal subunit protein bL33 from Dechloromonas aromatica (strain RCB).